The following is a 1202-amino-acid chain: CHD3-type chromatin-remodeling factor CHR7 (1202 aa).

2 consecutive Chromo domains span residues 45–109 (GEIE…HPHL) and 142–201 (KTVD…RDKY). The Helicase ATP-binding domain occupies 237-405 (RYSWSKKTNV…FALMHFLDAD (169 aa)). 250 to 257 (DEMGLGKT) is an ATP binding site. The DEAH box signature appears at 356–359 (DEGH). The region spanning 528–679 (LLDKMMVKLK…HLVVGKQHLC (152 aa)) is the Helicase C-terminal domain. Residues 838–872 (TSDEEEEADEPEAARQRKPRTVTRPYRKRARDNSE) are disordered. The span at 853–867 (QRKPRTVTRPYRKRA) shows a compositional bias: basic residues.

It belongs to the SNF2/RAD54 helicase family.

It localises to the nucleus. In terms of biological role, chromatin remodeling factor that represses the expression of embryonic trait genes upon and after seed germination and thus enables the developmental switch to post-germinative growth. This Arabidopsis thaliana (Mouse-ear cress) protein is CHD3-type chromatin-remodeling factor CHR7.